The chain runs to 72 residues: Dermaseptin AA-3-4 (72 aa).

The first 22 residues, 1 to 22 (MAFLKKSLFLVLFLGLVSLSIC), serve as a signal peptide directing secretion. A propeptide spanning residues 23-43 (DEEKRENEDEEEQEDDEQSEE) is cleaved from the precursor. The interval 24 to 45 (EEKRENEDEEEQEDDEQSEEKR) is disordered. Acidic residues predominate over residues 30–41 (EDEEEQEDDEQS).

The protein belongs to the frog skin active peptide (FSAP) family. In terms of tissue distribution, expressed by the skin glands.

It localises to the secreted. Its function is as follows. Possesses a potent antimicrobial activity against Gram-positive and Gram-negative bacteria. Probably acts by disturbing membrane functions with its amphipathic structure. This is Dermaseptin AA-3-4 from Agalychnis annae (Blue-sided leaf frog).